We begin with the raw amino-acid sequence, 388 residues long: Succinate--CoA ligase [ADP-forming] subunit beta (388 aa).

The ATP-grasp domain maps to 9–244 (KGILSGFDVR…PHEYSEEELE (236 aa)). ATP-binding positions include Lys46, 53-55 (GRG), Glu99, Val102, and Glu107. Mg(2+) is bound by residues Asn199 and Asp213. Residues Asn264 and 320–322 (GIM) each bind substrate.

Belongs to the succinate/malate CoA ligase beta subunit family. Heterotetramer of two alpha and two beta subunits. Mg(2+) is required as a cofactor.

It catalyses the reaction succinate + ATP + CoA = succinyl-CoA + ADP + phosphate. The enzyme catalyses GTP + succinate + CoA = succinyl-CoA + GDP + phosphate. It functions in the pathway carbohydrate metabolism; tricarboxylic acid cycle; succinate from succinyl-CoA (ligase route): step 1/1. Functionally, succinyl-CoA synthetase functions in the citric acid cycle (TCA), coupling the hydrolysis of succinyl-CoA to the synthesis of either ATP or GTP and thus represents the only step of substrate-level phosphorylation in the TCA. The beta subunit provides nucleotide specificity of the enzyme and binds the substrate succinate, while the binding sites for coenzyme A and phosphate are found in the alpha subunit. The sequence is that of Succinate--CoA ligase [ADP-forming] subunit beta from Anaplasma phagocytophilum (strain HZ).